The following is a 318-amino-acid chain: L-malyl-CoA/beta-methylmalyl-CoA lyase (318 aa).

Substrate contacts are provided by phenylalanine 19, arginine 24, lysine 30, and arginine 76. 2 residues coordinate Mg(2+): glutamate 141 and aspartate 168. Substrate-binding positions include 167–168 (AD) and 251–252 (IH).

The protein belongs to the HpcH/HpaI aldolase family. In terms of assembly, homohexamer. Dimer of trimers. Mg(2+) is required as a cofactor. Requires Mn(2+) as cofactor.

It carries out the reaction (S)-malyl-CoA = glyoxylate + acetyl-CoA. The catalysed reaction is (2R,3S)-beta-methylmalyl-CoA = propanoyl-CoA + glyoxylate. Its function is as follows. Involved in the ethylmalonyl-CoA pathway for acetate assimilation. Catalyzes the reversible condensation of glyoxylate and acetyl-CoA to L-malyl-CoA and the reversible condensation of glyoxylate and propionyl-CoA to yield beta-methylmalyl-CoA. In Cereibacter sphaeroides (strain ATCC 17029 / ATH 2.4.9) (Rhodobacter sphaeroides), this protein is L-malyl-CoA/beta-methylmalyl-CoA lyase.